The primary structure comprises 326 residues: Glycerol-3-phosphate dehydrogenase [NAD(P)+] (326 aa).

Residues Trp-13, Arg-33, and Lys-107 each coordinate NADPH. Residues Lys-107, Gly-135, and Ser-137 each coordinate sn-glycerol 3-phosphate. Residue Ala-139 coordinates NADPH. Positions 190, 243, 253, 254, and 255 each coordinate sn-glycerol 3-phosphate. The active-site Proton acceptor is Lys-190. An NADPH-binding site is contributed by Arg-254. The NADPH site is built by Leu-273 and Glu-275.

It belongs to the NAD-dependent glycerol-3-phosphate dehydrogenase family.

It localises to the cytoplasm. The enzyme catalyses sn-glycerol 3-phosphate + NAD(+) = dihydroxyacetone phosphate + NADH + H(+). It carries out the reaction sn-glycerol 3-phosphate + NADP(+) = dihydroxyacetone phosphate + NADPH + H(+). The protein operates within membrane lipid metabolism; glycerophospholipid metabolism. Functionally, catalyzes the reduction of the glycolytic intermediate dihydroxyacetone phosphate (DHAP) to sn-glycerol 3-phosphate (G3P), the key precursor for phospholipid synthesis. This chain is Glycerol-3-phosphate dehydrogenase [NAD(P)+], found in Brucella abortus (strain 2308).